Consider the following 301-residue polypeptide: Light-independent protochlorophyllide reductase iron-sulfur ATP-binding protein (301 aa).

Over residues 1-13 the composition is skewed to low complexity; that stretch reads MNVTLRPPLTTAP. Residues 1–21 form a disordered region; sequence MNVTLRPPLTTAPRRPDGAGS. Residues 45-50 and K74 each bind ATP; that span reads GIGKST. A Mg(2+)-binding site is contributed by S49. [4Fe-4S] cluster contacts are provided by C130 and C164. ATP is bound by residues 215-216 and 239-241; these read NR and PDL.

It belongs to the NifH/BchL/ChlL family. As to quaternary structure, homodimer. Protochlorophyllide reductase is composed of three subunits; BchL, BchN and BchB. The cofactor is [4Fe-4S] cluster.

It catalyses the reaction chlorophyllide a + oxidized 2[4Fe-4S]-[ferredoxin] + 2 ADP + 2 phosphate = protochlorophyllide a + reduced 2[4Fe-4S]-[ferredoxin] + 2 ATP + 2 H2O. It functions in the pathway porphyrin-containing compound metabolism; bacteriochlorophyll biosynthesis (light-independent). Its function is as follows. Component of the dark-operative protochlorophyllide reductase (DPOR) that uses Mg-ATP and reduced ferredoxin to reduce ring D of protochlorophyllide (Pchlide) to form chlorophyllide a (Chlide). This reaction is light-independent. The L component serves as a unique electron donor to the NB-component of the complex, and binds Mg-ATP. The sequence is that of Light-independent protochlorophyllide reductase iron-sulfur ATP-binding protein from Bradyrhizobium sp. (strain BTAi1 / ATCC BAA-1182).